Here is a 1182-residue protein sequence, read N- to C-terminus: IQ motif and SEC7 domain-containing protein 3 (1182 aa).

Residues 20-56 (AIVQNQQSLIHTQRERIDELERRLDELSAENRSLWEH) are a coiled coil. 2 disordered regions span residues 62–157 (AQPP…ERPP) and 230–275 (AAGR…RQQP). A compositionally biased stretch (pro residues) spans 63 to 78 (QPPPGLVPPSSAPLPA). Low complexity-rich tracts occupy residues 79-105 (APAT…AAAP) and 254-263 (GAGAASPRAG). Serine 259 bears the Phosphoserine mark. Residues 315–344 (SRRAACTIQTAFRQYQLSKNFEKIRNSLLE) form the IQ domain. Disordered regions lie at residues 444-479 (AGPP…AHSG) and 521-616 (EPAA…ASAS). Residues 533–548 (SGREAPEAPAVGREDA) show a composition bias toward basic and acidic residues. Residues 555 to 569 (AEAAASGAADGATAP) show a composition bias toward low complexity. Over residues 572-581 (EEEEEEEETA) the composition is skewed to acidic residues. Residues 598 to 616 (SSSSTSTKSAKSGSEASAS) are compositionally biased toward low complexity. Positions 644–837 (TLSTDTLRKR…VGIYERIQQK (194 aa)) constitute an SEC7 domain. Residues 850–983 (TKVEKSIVGM…LKESIAEVTE (134 aa)) form the PH domain. Residues 964–992 (SDEMQKFVEDLKESIAEVTELEQIRIEWE) adopt a coiled-coil conformation. Disordered regions lie at residues 1002-1090 (LSFK…PGTL) and 1121-1182 (YTSS…RSLV). Residues 1022 to 1033 (AKREAALRERPA) are compositionally biased toward basic and acidic residues. Residues 1043 to 1052 (NRLQTSQHNS) show a composition bias toward polar residues. A compositionally biased stretch (pro residues) spans 1061–1087 (PVPPPDLQPSPPRQQTPPLPPPPPTPP). A compositionally biased stretch (low complexity) spans 1121 to 1132 (YTSSSSDSCGST). A compositionally biased stretch (pro residues) spans 1147–1157 (PPLPPPPPPYN).

It belongs to the BRAG family. As to quaternary structure, interacts with DLG1 and DLG4. Interacts with GPHN. In terms of tissue distribution, expressed specifically in the adult brain, predominantly in the cerebral cortex and the olfactory bulb, but not in the fetal brain. Expressed only in mature neurons, but not in undifferentiated neural stem precursor cells (NSPCs), nor in glioma cells.

It is found in the cytoplasm. Its subcellular location is the postsynaptic density. In terms of biological role, acts as a guanine nucleotide exchange factor (GEF) for ARF1. The polypeptide is IQ motif and SEC7 domain-containing protein 3 (IQSEC3) (Homo sapiens (Human)).